A 294-amino-acid chain; its full sequence is Cyclin-G1 (294 aa).

Belongs to the cyclin family. Cyclin G subfamily. In terms of assembly, binds to B' regulatory B subunits of protein phosphatase A (PP2A) following induction by p53 (in vitro). In terms of tissue distribution, highest levels in kidney, heart and skeletal muscle.

It localises to the nucleus. May play a role in growth regulation. Is associated with G2/M phase arrest in response to DNA damage. May be an intermediate by which p53 mediates its role as an inhibitor of cellular proliferation. This Mus musculus (Mouse) protein is Cyclin-G1 (Ccng1).